Here is a 192-residue protein sequence, read N- to C-terminus: ATP-dependent Clp protease proteolytic subunit 1 (192 aa).

Residue serine 92 is the Nucleophile of the active site. Histidine 117 is a catalytic residue.

It belongs to the peptidase S14 family. As to quaternary structure, fourteen ClpP subunits assemble into 2 heptameric rings which stack back to back to give a disk-like structure with a central cavity, resembling the structure of eukaryotic proteasomes.

It is found in the cytoplasm. It catalyses the reaction Hydrolysis of proteins to small peptides in the presence of ATP and magnesium. alpha-casein is the usual test substrate. In the absence of ATP, only oligopeptides shorter than five residues are hydrolyzed (such as succinyl-Leu-Tyr-|-NHMec, and Leu-Tyr-Leu-|-Tyr-Trp, in which cleavage of the -Tyr-|-Leu- and -Tyr-|-Trp bonds also occurs).. Cleaves peptides in various proteins in a process that requires ATP hydrolysis. Has a chymotrypsin-like activity. Plays a major role in the degradation of misfolded proteins. The protein is ATP-dependent Clp protease proteolytic subunit 1 of Chlamydia abortus (strain DSM 27085 / S26/3) (Chlamydophila abortus).